Here is a 148-residue protein sequence, read N- to C-terminus: MQVILLEKVVNLGNLGDIVKVKDGYGRNFLIPQGKAKRATEANKAEFEARRAELEKQQAEQLAAAQKRGEKLAGFMLQVTQKAGVDGRLFGSVTNGDIAEALTAQGFEVSKSEVRLPEGPLKAIGDYQVHIALHHDVVVEITVSVLGE.

The protein belongs to the bacterial ribosomal protein bL9 family.

Its function is as follows. Binds to the 23S rRNA. The chain is Large ribosomal subunit protein bL9 from Methylobacillus flagellatus (strain ATCC 51484 / DSM 6875 / VKM B-1610 / KT).